The following is a 389-amino-acid chain: S-adenosylmethionine synthase (389 aa).

Position 16 (His-16) interacts with ATP. Asp-18 contributes to the Mg(2+) binding site. Glu-44 lines the K(+) pocket. Positions 57 and 100 each coordinate L-methionine. A flexible loop region spans residues 100–110 (QSPDIAQGVDE). Residues 167–169 (DAK), 233–234 (RF), Asp-242, 248–249 (RK), Ala-265, and Lys-269 contribute to the ATP site. An L-methionine-binding site is contributed by Asp-242. Lys-273 is a binding site for L-methionine.

The protein belongs to the AdoMet synthase family. Homotetramer; dimer of dimers. Mg(2+) serves as cofactor. K(+) is required as a cofactor.

It localises to the cytoplasm. It carries out the reaction L-methionine + ATP + H2O = S-adenosyl-L-methionine + phosphate + diphosphate. It functions in the pathway amino-acid biosynthesis; S-adenosyl-L-methionine biosynthesis; S-adenosyl-L-methionine from L-methionine: step 1/1. Catalyzes the formation of S-adenosylmethionine (AdoMet) from methionine and ATP. The overall synthetic reaction is composed of two sequential steps, AdoMet formation and the subsequent tripolyphosphate hydrolysis which occurs prior to release of AdoMet from the enzyme. This is S-adenosylmethionine synthase from Acidithiobacillus ferrooxidans (strain ATCC 23270 / DSM 14882 / CIP 104768 / NCIMB 8455) (Ferrobacillus ferrooxidans (strain ATCC 23270)).